The following is a 252-amino-acid chain: Imidazole glycerol phosphate synthase subunit HisF (252 aa).

Residues Asp-11 and Asp-130 contribute to the active site.

It belongs to the HisA/HisF family. As to quaternary structure, heterodimer of HisH and HisF.

The protein localises to the cytoplasm. It catalyses the reaction 5-[(5-phospho-1-deoxy-D-ribulos-1-ylimino)methylamino]-1-(5-phospho-beta-D-ribosyl)imidazole-4-carboxamide + L-glutamine = D-erythro-1-(imidazol-4-yl)glycerol 3-phosphate + 5-amino-1-(5-phospho-beta-D-ribosyl)imidazole-4-carboxamide + L-glutamate + H(+). The protein operates within amino-acid biosynthesis; L-histidine biosynthesis; L-histidine from 5-phospho-alpha-D-ribose 1-diphosphate: step 5/9. Its function is as follows. IGPS catalyzes the conversion of PRFAR and glutamine to IGP, AICAR and glutamate. The HisF subunit catalyzes the cyclization activity that produces IGP and AICAR from PRFAR using the ammonia provided by the HisH subunit. The chain is Imidazole glycerol phosphate synthase subunit HisF from Lactiplantibacillus plantarum (strain ATCC BAA-793 / NCIMB 8826 / WCFS1) (Lactobacillus plantarum).